The chain runs to 508 residues: uncharacterized protein (508 aa).

12 helical membrane passes run 65 to 87, 104 to 124, 136 to 156, 160 to 180, 192 to 212, 224 to 244, 292 to 312, 333 to 353, 357 to 377, 384 to 404, 416 to 436, and 450 to 470; these read IFPV…SYAV, WSGT…SLLL, FLVI…PGFI, VLLG…TAQW, VWVA…YGLA, LIFI…LAVV, TWIM…IGTF, LPAG…SLFI, MVLA…LSFA, LAGY…FAII, TVGV…PQTF, and TMVG…YVNW.

Belongs to the major facilitator superfamily. Allantoate permease family.

The protein localises to the endoplasmic reticulum. It is found in the golgi apparatus. Its subcellular location is the membrane. This is an uncharacterized protein from Schizosaccharomyces pombe (strain 972 / ATCC 24843) (Fission yeast).